Reading from the N-terminus, the 158-residue chain is Vasotocin-neurophysin VT 2 (158 aa).

An N-terminal signal peptide occupies residues 1–19 (MPHSTLLLCVIGLLAFSSA). Cys20 and Cys25 are joined by a disulfide. Gly28 is modified (glycine amide). 7 cysteine pairs are disulfide-bonded: Cys41–Cys85, Cys44–Cys58, Cys52–Cys75, Cys59–Cys65, Cys92–Cys105, Cys99–Cys117, and Cys106–Cys111.

It belongs to the vasopressin/oxytocin family. Seven disulfide bonds are present in neurophysin.

It is found in the secreted. In terms of biological role, vasotocin is an antidiuretic hormone. This Oncorhynchus keta (Chum salmon) protein is Vasotocin-neurophysin VT 2.